The following is a 512-amino-acid chain: Cytoplasmic tRNA 2-thiolation protein 2-A (512 aa).

It belongs to the CTU2/NCS2 family.

The protein resides in the cytoplasm. It participates in tRNA modification; 5-methoxycarbonylmethyl-2-thiouridine-tRNA biosynthesis. Functionally, plays a central role in 2-thiolation of mcm(5)S(2)U at tRNA wobble positions of tRNA(Lys), tRNA(Glu) and tRNA(Gln). May act by forming a heterodimer with ctu1/atpbd3 that ligates sulfur from thiocarboxylated urm1 onto the uridine of tRNAs at wobble position. This Xenopus laevis (African clawed frog) protein is Cytoplasmic tRNA 2-thiolation protein 2-A (ctu2-a).